Reading from the N-terminus, the 348-residue chain is Protein pelota homolog (348 aa).

This sequence belongs to the eukaryotic release factor 1 family. Pelota subfamily. In terms of assembly, monomer. A divalent metal cation is required as a cofactor.

Its subcellular location is the cytoplasm. May function in recognizing stalled ribosomes, interact with stem-loop structures in stalled mRNA molecules, and effect endonucleolytic cleavage of the mRNA. May play a role in the release non-functional ribosomes and degradation of damaged mRNAs. Has endoribonuclease activity. This chain is Protein pelota homolog, found in Methanococcus maripaludis (strain DSM 14266 / JCM 13030 / NBRC 101832 / S2 / LL).